A 559-amino-acid chain; its full sequence is Paxillin (559 aa).

Residues 3–15 (DLDALLADLESTT) carry the LD motif 1 motif. A disordered region spans residues 17–139 (HISKRPVFLT…SPTMTSTSLG (123 aa)). At Tyr-31 the chain carries Phosphotyrosine. A compositionally biased stretch (pro residues) spans 45–54 (VPPPVPPPPS). The segment covering 79–98 (QQPQSQSPIYSSSAKSSSAS) has biased composition (low complexity). Tyr-118 bears the Phosphotyrosine; by FAK1 mark. Residues 121–137 (PNKQKSAEPSPTMTSTS) are compositionally biased toward polar residues. The short motif at 144 to 156 (ELDRLLLELNAVQ) is the LD motif 2 element. Disordered regions lie at residues 158 to 213 (NPPS…GIED) and 225 to 262 (LESS…SASS). The LD motif 3 motif lies at 217 to 229 (SVESLLDELESSV). Residues 237–262 (TVSQGEVSSPQRVNASQQQTRISASS) show a composition bias toward polar residues. The required for binding to PARVA and ILK stretch occupies residues 263–282 (ATRELDELMASLSDFKFMAQ). 2 short sequence motifs (LD motif) span residues 266 to 277 (ELDELMASLSDF) and 301 to 313 (QLDT…QSDL). Positions 281–301 (AQGKAGGSSSPPSTTPKPGSQ) are disordered. LIM zinc-binding domains follow at residues 326-376 (CGAC…CEKD), 385-435 (CYYC…CRKD), 444-494 (CGGC…CEVH), and 503-553 (CSGC…CQNC).

Interacts (via LD motif 4) with PARVA/PARVIN and ILK. In terms of processing, phosphorylated on tyrosine residues during integrin-mediated cell adhesion, embryonic development, fibroblast transformation and following stimulation of cells by mitogens.

It is found in the cytoplasm. Its subcellular location is the cytoskeleton. The protein resides in the cell junction. It localises to the focal adhesion. The protein localises to the cell cortex. Its function is as follows. Cytoskeletal protein involved in actin-membrane attachment at sites of cell adhesion to the extracellular matrix (focal adhesion). Binds in vitro to vinculin as well as to the SH3 domain of c-SRC and, when tyrosine phosphorylated, to the SH2 domain of v-CRK. The polypeptide is Paxillin (PXN) (Gallus gallus (Chicken)).